The sequence spans 441 residues: Amino-acid acetyltransferase (441 aa).

In terms of domain architecture, N-acetyltransferase spans 295-434; it reads EQVRRATIND…QELYNYQRRS (140 aa).

Belongs to the acetyltransferase family. ArgA subfamily. In terms of assembly, homohexamer.

The protein resides in the cytoplasm. It catalyses the reaction L-glutamate + acetyl-CoA = N-acetyl-L-glutamate + CoA + H(+). It participates in amino-acid biosynthesis; L-arginine biosynthesis; N(2)-acetyl-L-ornithine from L-glutamate: step 1/4. The protein is Amino-acid acetyltransferase of Yersinia enterocolitica serotype O:8 / biotype 1B (strain NCTC 13174 / 8081).